A 317-amino-acid chain; its full sequence is Acetyl-coenzyme A carboxylase carboxyl transferase subunit beta (317 aa).

One can recognise a CoA carboxyltransferase N-terminal domain in the interval 30–299; it reads LWTKCVACTA…VLPPLNVREK (270 aa). Zn(2+)-binding residues include Cys34, Cys37, Cys53, and Cys56. Residues 34 to 56 form a C4-type zinc finger; the sequence is CVACTALTYTKDLQANQLVCTEC.

Belongs to the AccD/PCCB family. As to quaternary structure, acetyl-CoA carboxylase is a heterohexamer composed of biotin carboxyl carrier protein (AccB), biotin carboxylase (AccC) and two subunits each of ACCase subunit alpha (AccA) and ACCase subunit beta (AccD). Zn(2+) serves as cofactor.

Its subcellular location is the cytoplasm. It carries out the reaction N(6)-carboxybiotinyl-L-lysyl-[protein] + acetyl-CoA = N(6)-biotinyl-L-lysyl-[protein] + malonyl-CoA. It participates in lipid metabolism; malonyl-CoA biosynthesis; malonyl-CoA from acetyl-CoA: step 1/1. Its function is as follows. Component of the acetyl coenzyme A carboxylase (ACC) complex. Biotin carboxylase (BC) catalyzes the carboxylation of biotin on its carrier protein (BCCP) and then the CO(2) group is transferred by the transcarboxylase to acetyl-CoA to form malonyl-CoA. The protein is Acetyl-coenzyme A carboxylase carboxyl transferase subunit beta of Crocosphaera subtropica (strain ATCC 51142 / BH68) (Cyanothece sp. (strain ATCC 51142)).